The sequence spans 201 residues: ADP-ribosylation factor-related protein 1 (201 aa).

Met1 is subject to N-acetylmethionine. Residues 24 to 31 (GLDNAGKT), 75 to 79 (DLGGQ), and 134 to 137 (NKQD) each bind GTP.

The protein belongs to the small GTPase superfamily. Arf family. In terms of assembly, interacts with SYS1.

It is found in the golgi apparatus. The protein resides in the trans-Golgi network. Its function is as follows. Trans-Golgi-associated GTPase that regulates protein sorting. Controls the targeting of ARL1 and its effector to the trans-Golgi. Required for the lipidation of chylomicrons in the intestine and required for VLDL lipidation in the liver. The sequence is that of ADP-ribosylation factor-related protein 1 (ARFRP1) from Pongo abelii (Sumatran orangutan).